The following is a 447-amino-acid chain: ATP-dependent protease ATPase subunit HslU (447 aa).

Residues Ile-17, 59 to 64 (GVGKTE), Asp-256, Glu-321, and Arg-393 each bind ATP.

The protein belongs to the ClpX chaperone family. HslU subfamily. A double ring-shaped homohexamer of HslV is capped on each side by a ring-shaped HslU homohexamer. The assembly of the HslU/HslV complex is dependent on binding of ATP.

It localises to the cytoplasm. Functionally, ATPase subunit of a proteasome-like degradation complex; this subunit has chaperone activity. The binding of ATP and its subsequent hydrolysis by HslU are essential for unfolding of protein substrates subsequently hydrolyzed by HslV. HslU recognizes the N-terminal part of its protein substrates and unfolds these before they are guided to HslV for hydrolysis. This is ATP-dependent protease ATPase subunit HslU from Pseudomonas putida (strain ATCC 47054 / DSM 6125 / CFBP 8728 / NCIMB 11950 / KT2440).